The primary structure comprises 662 residues: UvrABC system protein B (662 aa).

One can recognise a Helicase ATP-binding domain in the interval Glu-25–Arg-412. Gly-38 to Thr-45 lines the ATP pocket. The short motif at Tyr-91 to Ile-114 is the Beta-hairpin element. Positions Gln-429 to Ile-595 constitute a Helicase C-terminal domain. One can recognise a UVR domain in the interval Lys-622–Gln-657.

This sequence belongs to the UvrB family. As to quaternary structure, forms a heterotetramer with UvrA during the search for lesions. Interacts with UvrC in an incision complex.

The protein resides in the cytoplasm. In terms of biological role, the UvrABC repair system catalyzes the recognition and processing of DNA lesions. A damage recognition complex composed of 2 UvrA and 2 UvrB subunits scans DNA for abnormalities. Upon binding of the UvrA(2)B(2) complex to a putative damaged site, the DNA wraps around one UvrB monomer. DNA wrap is dependent on ATP binding by UvrB and probably causes local melting of the DNA helix, facilitating insertion of UvrB beta-hairpin between the DNA strands. Then UvrB probes one DNA strand for the presence of a lesion. If a lesion is found the UvrA subunits dissociate and the UvrB-DNA preincision complex is formed. This complex is subsequently bound by UvrC and the second UvrB is released. If no lesion is found, the DNA wraps around the other UvrB subunit that will check the other stand for damage. This chain is UvrABC system protein B, found in Carboxydothermus hydrogenoformans (strain ATCC BAA-161 / DSM 6008 / Z-2901).